Consider the following 441-residue polypeptide: Cytochrome P450 monooxygenase cpsC (441 aa).

Residues Ser-175 to Gln-195 form a disordered region. The segment covering Thr-186–Gln-195 has biased composition (polar residues). Cys-377 lines the heme pocket.

This sequence belongs to the cytochrome P450 family. The cofactor is heme.

The catalysed reaction is campesine D + reduced [NADPH--hemoprotein reductase] + O2 = campesine G + oxidized [NADPH--hemoprotein reductase] + 2 H2O + H(+). It participates in alkaloid biosynthesis. Cytochrome P450 monooxygenase; part of the gene cluster that mediates the biosynthesis of campesine G, a dimeric indole piperazine alkaloid that shows good insecticidal activity Galleria mellonella. Within the pathway, cpsC catalyzes regioselective dehydrogenation reaction towards C2-N1 of the (2H)-indole ring of campesine D to yield the final product, campesine G. The non-canonical non-ribosomal peptide synthetase cpsA catalyzes the first steps of the pathway by producing L-tryptophanal and L-valinal from their respective amino-acids. These products condensate spontaneously to form trypyl-valyl pyrazine also known as didehydrocampesine A. The NmrA-like family domain-containing oxidoreductase cpsB is the next enzyme in cps pathway and reduces the unstable didehydrocampesine A to campesine A. The methyltransferase cpsF and the acetyltransferase cpsE both recognize N13 of piperazine ring to carry out methylation and acetylation of campesine A to produce campesine C and B, respectively. The cytochrome P450 monooxygenase cpsD then acts as a dimerase that catalyzes oxidative heterocoupling between campesine B and C to produce heterodimers with unexpected 6/5/6/6/6/6/5/6 eight-ring scaffold called campesine D. Finally,the cytochrome P450 monooxygenase cpsC is a regioselective dehydrogenase that catalyzes dehydrogenation reaction towards C2-N1 to produce campesine G. In Aspergillus campestris (strain IBT 28561), this protein is Cytochrome P450 monooxygenase cpsC.